We begin with the raw amino-acid sequence, 175 residues long: Small ribosomal subunit protein uS5 (175 aa).

The region spanning 11 to 74 is the S5 DRBM domain; it reads LSEVLVDVNR…QAAKKRMMKV (64 aa).

It belongs to the universal ribosomal protein uS5 family. Part of the 30S ribosomal subunit. Contacts proteins S4 and S8.

Functionally, with S4 and S12 plays an important role in translational accuracy. In terms of biological role, located at the back of the 30S subunit body where it stabilizes the conformation of the head with respect to the body. This Rickettsia prowazekii (strain Madrid E) protein is Small ribosomal subunit protein uS5.